The following is a 235-amino-acid chain: UPF0714 protein YmaC (235 aa).

A helical membrane pass occupies residues 5-24 (LLNVILVLAIVLFLRYVHYS).

It belongs to the UPF0714 family.

It is found in the cell membrane. This is UPF0714 protein YmaC (ymaC) from Bacillus subtilis (strain 168).